Consider the following 277-residue polypeptide: Undecaprenyl-diphosphatase (277 aa).

Helical transmembrane passes span 3–23 (IALLIKAAIMGIVEGLTEFLP), 44–64 (AKVFDIAIQTGAIFAVILVYW), 82–102 (QFALNVLVAFVPAVVLGLLFG), 109–129 (LFTPVVVASAFIVGGFIILWA), 189–209 (TDFSFYLAIPTLIGAGAYSLF), 218–238 (ADAPMFGVGLLFSFLSAWLCI), and 253–273 (FAWYRIAFGIVVLATAWSGVV).

The protein belongs to the UppP family.

It is found in the cell inner membrane. It carries out the reaction di-trans,octa-cis-undecaprenyl diphosphate + H2O = di-trans,octa-cis-undecaprenyl phosphate + phosphate + H(+). Functionally, catalyzes the dephosphorylation of undecaprenyl diphosphate (UPP). Confers resistance to bacitracin. The polypeptide is Undecaprenyl-diphosphatase (Polaromonas naphthalenivorans (strain CJ2)).